We begin with the raw amino-acid sequence, 61 residues long: Metallothionein-1M (61 aa).

Positions 1–29 are beta; sequence MDPNCSCTTGVSCACTGSCTCKECKCTSC. A divalent metal cation is bound by residues Cys5, Cys7, Cys13, Cys15, Cys19, Cys21, Cys24, Cys26, Cys29, Cys33, Cys34, Cys36, Cys37, Cys41, Cys44, Cys48, Cys50, Cys57, Cys59, and Cys60. Residues 30–61 form an alpha region; the sequence is KKSCCSCCPVGCAKCAHGCVCKGTLENCSCCA.

The protein belongs to the metallothionein superfamily. Type 1 family. As to quaternary structure, monomer.

Metallothioneins have a high content of cysteine residues that bind various heavy metals; these proteins are transcriptionally regulated by both heavy metals and glucocorticoids. The sequence is that of Metallothionein-1M (MT1M) from Homo sapiens (Human).